The primary structure comprises 1007 residues: Probable inorganic carbon transporter subunit DabA (1007 aa).

Residues cysteine 442, aspartate 444, histidine 696, and cysteine 711 each contribute to the Zn(2+) site.

Belongs to the inorganic carbon transporter (TC 9.A.2) DabA family. Forms a complex with DabB. Zn(2+) is required as a cofactor.

It is found in the cell inner membrane. Functionally, part of an energy-coupled inorganic carbon pump. The protein is Probable inorganic carbon transporter subunit DabA of Aquifex aeolicus (strain VF5).